The following is a 415-amino-acid chain: Serine hydroxymethyltransferase 1 (415 aa).

Residues Leu-122 and 126–128 each bind (6S)-5,6,7,8-tetrahydrofolate; that span reads GHL. Lys-230 carries the N6-(pyridoxal phosphate)lysine modification.

This sequence belongs to the SHMT family. In terms of assembly, homodimer. Pyridoxal 5'-phosphate serves as cofactor.

It is found in the cytoplasm. The enzyme catalyses (6R)-5,10-methylene-5,6,7,8-tetrahydrofolate + glycine + H2O = (6S)-5,6,7,8-tetrahydrofolate + L-serine. Its pathway is one-carbon metabolism; tetrahydrofolate interconversion. It participates in amino-acid biosynthesis; glycine biosynthesis; glycine from L-serine: step 1/1. Catalyzes the reversible interconversion of serine and glycine with tetrahydrofolate (THF) serving as the one-carbon carrier. This reaction serves as the major source of one-carbon groups required for the biosynthesis of purines, thymidylate, methionine, and other important biomolecules. Also exhibits THF-independent aldolase activity toward beta-hydroxyamino acids, producing glycine and aldehydes, via a retro-aldol mechanism. This chain is Serine hydroxymethyltransferase 1, found in Cupriavidus pinatubonensis (strain JMP 134 / LMG 1197) (Cupriavidus necator (strain JMP 134)).